Reading from the N-terminus, the 127-residue chain is Large ribosomal subunit protein bL17 (127 aa).

Belongs to the bacterial ribosomal protein bL17 family. Part of the 50S ribosomal subunit. Contacts protein L32.

The protein is Large ribosomal subunit protein bL17 of Fervidobacterium nodosum (strain ATCC 35602 / DSM 5306 / Rt17-B1).